The primary structure comprises 381 residues: Dihydroorotate dehydrogenase (quinone) (381 aa).

FMN-binding positions include A74–K78 and T98. K78 provides a ligand contact to substrate. N123–F127 is a substrate binding site. FMN is bound by residues N152 and N185. N185 provides a ligand contact to substrate. S188 functions as the Nucleophile in the catalytic mechanism. N190 is a binding site for substrate. K223 and T251 together coordinate FMN. N252–T253 serves as a coordination point for substrate. FMN is bound by residues G289, G318, and Y339–T340. A disordered region spans residues R359–A381.

It belongs to the dihydroorotate dehydrogenase family. Type 2 subfamily. As to quaternary structure, monomer. FMN serves as cofactor.

Its subcellular location is the cell membrane. The catalysed reaction is (S)-dihydroorotate + a quinone = orotate + a quinol. The protein operates within pyrimidine metabolism; UMP biosynthesis via de novo pathway; orotate from (S)-dihydroorotate (quinone route): step 1/1. Functionally, catalyzes the conversion of dihydroorotate to orotate with quinone as electron acceptor. The polypeptide is Dihydroorotate dehydrogenase (quinone) (Synechococcus sp. (strain JA-2-3B'a(2-13)) (Cyanobacteria bacterium Yellowstone B-Prime)).